Here is a 388-residue protein sequence, read N- to C-terminus: Trans-enoyl reductase tenC (388 aa).

51–54 (VDGK) contributes to the NADP(+) binding site. 142-149 (VGIASVGM) is a substrate binding site. NADP(+) is bound by residues 219–222 (SSES), Tyr-237, and 284–285 (LD). 304 to 308 (SFTQF) provides a ligand contact to substrate. Position 373–374 (373–374 (IK)) interacts with NADP(+).

The protein belongs to the zinc-containing alcohol dehydrogenase family. As to quaternary structure, monomer.

Its pathway is secondary metabolite biosynthesis. Trans-enoyl reductase; part of the gene cluster that mediates the biosynthesis of tenellin-type 2-pyridones, iron-chelating compounds involved in iron stress tolerance, competition with the natural competitor fungus Metarhizium robertsii and insect hosts infection. TenC collaborates with the hybrid PKS-NRPS synthetase tenS to catalyze the assembly of the polyketide-amino acid backbone, since tenS lacks a designated enoylreductase (ER) domain. Upon formation of the polyketide backbone on the thiotemplate of tenS, the triketide is transferred to the NRPS module and linked to tyrosine to produce the pyrrolidine-2-dione intermediates, including pretellinin A, 11-hydropretellenin A, 12-hydropretellenin A, 13-hydropretellenin A, 14-hydropretellenin A, 12-oxopretellenin A and prototellinin D. The pathway begins with the assembly of the polyketide-amino acid backbone by the hybrid PKS-NRPS tenS with the help of the enoyl reductase tenC. These enzymes catalyze the synthesis of the pyrrolidine-2-dione intermediates pretellinin A, 11-hydropretellenin A, 12-hydropretellenin A, 13-hydropretellenin A, 14-hydropretellenin A, 12-oxopretellenin A and prototellinin D. The cytochrome P450 monooxygenase tenA then catalyzes an oxidative ring expansion of pretenellin A and 14-hydropretellenin A to form the 2-pyridone core, leading to pretenellin B and pyridovericin, respectively. The cytochrome P450 monooxygenase tenB is then required for the selective N-hydroxylation of the 2-pyridone nitrogen of yield tellinin and 15-hydroxytellenin (15-HT), respectively. The UDP-glucosyltransferase GT1 and the methyltransferase MT1, located outside the tenS gene cluster, contribute to the stepwise glycosylation and methylation of 15-HT to obtain the glycoside pyridovericin-N-O-(4-O-methyl-beta-D-glucopyranoside) (PMGP). Additional related compounds such as 1-O-methyl-15-HT, (8Z)-1-O-methyl-15-HT, and O-methyltenellin A are also produced but the enzymes involved in their biosynthesis have still to be determined. This is Trans-enoyl reductase tenC from Beauveria bassiana (strain ARSEF 2860) (White muscardine disease fungus).